The primary structure comprises 109 residues: Hainantoxin-XVIII-4 (109 aa).

A signal peptide spans 1 to 18 (MKLSIIIIATSLVIAVVA). A propeptide spanning residues 19 to 46 (FPSKDSKAIENDKTEQRMEIVVQETARA) is cleaved from the precursor. 3 cysteine pairs are disulfide-bonded: Cys-55/Cys-68, Cys-59/Cys-108, and Cys-61/Cys-81.

Belongs to the neurotoxin 25 family. F7 subfamily. As to expression, expressed by the venom gland.

Its subcellular location is the secreted. Putative ion channel inhibitor. The protein is Hainantoxin-XVIII-4 of Cyriopagopus hainanus (Chinese bird spider).